The sequence spans 517 residues: GMP synthase [glutamine-hydrolyzing] (517 aa).

The region spanning 4-193 (KIIILDFGSQ…VVDICGGKQD (190 aa)) is the Glutamine amidotransferase type-1 domain. C79 serves as the catalytic Nucleophile. Residues H167 and E169 contribute to the active site. One can recognise a GMPS ATP-PPase domain in the interval 194–382 (WSAASFIETT…LGMPEHLITR (189 aa)). Residue 221-227 (SGGVDSS) participates in ATP binding.

In terms of assembly, homodimer.

The enzyme catalyses XMP + L-glutamine + ATP + H2O = GMP + L-glutamate + AMP + diphosphate + 2 H(+). Its pathway is purine metabolism; GMP biosynthesis; GMP from XMP (L-Gln route): step 1/1. Its function is as follows. Catalyzes the synthesis of GMP from XMP. This is GMP synthase [glutamine-hydrolyzing] from Phocaeicola vulgatus (strain ATCC 8482 / DSM 1447 / JCM 5826 / CCUG 4940 / NBRC 14291 / NCTC 11154) (Bacteroides vulgatus).